The sequence spans 570 residues: Phosphocholine hydrolase Lem3 (570 aa).

Its subcellular location is the secreted. It localises to the host cytoplasm. The enzyme catalyses [Rab1 protein]-O-phosphocholine-L-serine + H2O = [Rab1 protein]-L-serine + phosphocholine + H(+). In terms of biological role, virulence effector that plays a role in hijacking the host vesicular trafficking by recruiting the small guanosine triphosphatase (GTPase) Rab1 to the cytosolic face of the Legionella-containing vacuole (LCVs). Acts as a phosphocholine hydrolase by mediating the hydrolysis of phosphocholine to Ser residues of host RAB1 (RAB1A, RAB1B or RAB1C). Dephosphocholination of target proteins restores accessibility to GTPase effector LepB. Can act on both GDP-bound and GTP-bound Rab proteins. The polypeptide is Phosphocholine hydrolase Lem3 (lem3) (Legionella pneumophila subsp. pneumophila (strain Philadelphia 1 / ATCC 33152 / DSM 7513)).